The following is an 809-amino-acid chain: Phenylalanine--tRNA ligase beta subunit (809 aa).

A tRNA-binding domain is found at 39 to 154 (APPTSKIVVG…EDTPVGQDIR (116 aa)). Residues 405 to 480 (PQRAPVKMRV…RIYGFEKIPA (76 aa)) enclose the B5 domain. Asp-458, Asp-464, Glu-467, and Glu-468 together coordinate Mg(2+). The FDX-ACB domain maps to 707 to 808 (SKFPPVRRDI…RMARAGARLR (102 aa)).

Belongs to the phenylalanyl-tRNA synthetase beta subunit family. Type 1 subfamily. As to quaternary structure, tetramer of two alpha and two beta subunits. Mg(2+) serves as cofactor.

It is found in the cytoplasm. It carries out the reaction tRNA(Phe) + L-phenylalanine + ATP = L-phenylalanyl-tRNA(Phe) + AMP + diphosphate + H(+). In Burkholderia lata (strain ATCC 17760 / DSM 23089 / LMG 22485 / NCIMB 9086 / R18194 / 383), this protein is Phenylalanine--tRNA ligase beta subunit.